Consider the following 464-residue polypeptide: Citrate synthase 5, mitochondrial (464 aa).

The transit peptide at 1-25 (MVFFRSVSAISRLRSRAVQQSSLSN) directs the protein to the mitochondrion. Active-site residues include His-300, His-346, and Asp-401.

The protein belongs to the citrate synthase family.

It is found in the mitochondrion matrix. It carries out the reaction oxaloacetate + acetyl-CoA + H2O = citrate + CoA + H(+). It participates in carbohydrate metabolism; tricarboxylic acid cycle; isocitrate from oxaloacetate: step 1/2. This chain is Citrate synthase 5, mitochondrial (CSY5), found in Arabidopsis thaliana (Mouse-ear cress).